Here is a 499-residue protein sequence, read N- to C-terminus: Ethanolamine-phosphate phospho-lyase (499 aa).

Position 278 is an N6-(pyridoxal phosphate)lysine (K278). Basic and acidic residues predominate over residues 468 to 479 (RDSTTDSKENPS). The disordered stretch occupies residues 468–499 (RDSTTDSKENPSRKRNGMCTDTHSLLSKRLKT).

It belongs to the class-III pyridoxal-phosphate-dependent aminotransferase family. In terms of assembly, homotetramer. The cofactor is pyridoxal 5'-phosphate.

The protein localises to the mitochondrion. It carries out the reaction phosphoethanolamine + H2O = acetaldehyde + NH4(+) + phosphate. Its function is as follows. Catalyzes the pyridoxal-phosphate-dependent breakdown of phosphoethanolamine, converting it to ammonia, inorganic phosphate and acetaldehyde. The chain is Ethanolamine-phosphate phospho-lyase (ETNPPL) from Homo sapiens (Human).